The primary structure comprises 339 residues: Undecaprenyl-phosphate 4-deoxy-4-formamido-L-arabinose transferase (339 aa).

The next 2 membrane-spanning stretches (helical) occupy residues 235 to 255 and 270 to 290; these read LSII…MLIV and FVLF…MGLL.

It belongs to the glycosyltransferase 2 family.

Its subcellular location is the cell inner membrane. It catalyses the reaction UDP-4-deoxy-4-formamido-beta-L-arabinose + di-trans,octa-cis-undecaprenyl phosphate = 4-deoxy-4-formamido-alpha-L-arabinopyranosyl di-trans,octa-cis-undecaprenyl phosphate + UDP. It functions in the pathway glycolipid biosynthesis; 4-amino-4-deoxy-alpha-L-arabinose undecaprenyl phosphate biosynthesis; 4-amino-4-deoxy-alpha-L-arabinose undecaprenyl phosphate from UDP-4-deoxy-4-formamido-beta-L-arabinose and undecaprenyl phosphate: step 1/2. The protein operates within bacterial outer membrane biogenesis; lipopolysaccharide biosynthesis. Its function is as follows. Catalyzes the transfer of 4-deoxy-4-formamido-L-arabinose from UDP to undecaprenyl phosphate. The modified arabinose is attached to lipid A and is required for resistance to polymyxin and cationic antimicrobial peptides. The protein is Undecaprenyl-phosphate 4-deoxy-4-formamido-L-arabinose transferase of Pseudomonas fluorescens (strain ATCC BAA-477 / NRRL B-23932 / Pf-5).